We begin with the raw amino-acid sequence, 491 residues long: Neuronal acetylcholine receptor subunit beta-2 (491 aa).

The N-terminal stretch at 1-18 is a signal peptide; sequence MALLRVLCLLAALRRSLC. Residues 19–226 lie on the Extracellular side of the membrane; sequence TDTEERLVEY…ITYDFIIRRK (208 aa). Asn44 and Asn161 each carry an N-linked (GlcNAc...) asparagine glycan. Cys148 and Cys162 form a disulfide bridge. The chain crosses the membrane as a helical span at residues 227–251; sequence PLFYTINLIIPCILITSLAILVFYL. Residues 252 to 258 lie on the Cytoplasmic side of the membrane; it reads PSDCGEK. A helical membrane pass occupies residues 259–277; it reads MTLCISVLLALTVFLLLIS. At 278–292 the chain is on the extracellular side; sequence KIVPPTSLDVPLVGK. The chain crosses the membrane as a helical span at residues 293–314; it reads YLMFTMVLVTFSIVTSVCVLNV. Over 315–449 the chain is Cytoplasmic; the sequence is HHRSPTTHTM…WKYVAMVIDR (135 aa). The helical transmembrane segment at 450-468 threads the bilayer; the sequence is LFLWIFVFVCVFGTVGMFL.

It belongs to the ligand-gated ion channel (TC 1.A.9) family. Acetylcholine receptor (TC 1.A.9.1) subfamily. Beta-2/CHRNB2 sub-subfamily. As to quaternary structure, neuronal AChR is a heteropentamer composed of two different types of subunits: alpha and beta. CHRNB2/Beta-2 subunit can be combined to CHRNA2/alpha-2, CHRNA3/alpha-3 or CHRNA4/alpha-4, CHRNA5/alpha-5, CHRNA6/alpha-6 and CHRNB3/beta-3 to give rise to functional receptors.

It localises to the synaptic cell membrane. Its subcellular location is the cell membrane. The enzyme catalyses Ca(2+)(in) = Ca(2+)(out). It carries out the reaction K(+)(in) = K(+)(out). The catalysed reaction is Na(+)(in) = Na(+)(out). Its activity is regulated as follows. Activated by a myriad of ligands such as acetylcholine, cytisine, nicotine, choline and epibatidine. nAChR activity is inhibited by the antagonist alpha-conotoxins BuIA, PnIA, PnIC, GID and MII, small disulfide-constrained peptides from cone snails. In terms of biological role, component of neuronal acetylcholine receptors (nAChRs) that function as pentameric, ligand-gated cation channels with high calcium permeability among other activities. nAChRs are excitatory neurotrasnmitter receptors formed by a collection of nAChR subunits known to mediate synaptic transmission in the nervous system and the neuromuscular junction. Each nAchR subunit confers differential attributes to channel properties, including activation, deactivation and desensitization kinetics, pH sensitivity, cation permeability, and binding to allosteric modulators. CHRNB2 forms heteropentameric neuronal acetylcholine receptors with CHRNA2, CHRNA3, CHRNA4 and CHRNA6, as well as CHRNA5 and CHRNB3 as accesory subunits. This chain is Neuronal acetylcholine receptor subunit beta-2 (CHRNB2), found in Gallus gallus (Chicken).